The chain runs to 140 residues: MPLYQRIVAIDYGTKRIGVAKSDPLGMFAQPIGTVDRAGLSKLLSPMVEAGEVQLVVVGYPLNRHGEQTAMTEVIDRFIESLRLEFPALPIETINEHCSSKSAMQLLVASGTSRKERKTKGRLDTAAACLLLSDYLEQQK.

Belongs to the YqgF nuclease family.

It is found in the cytoplasm. Could be a nuclease involved in processing of the 5'-end of pre-16S rRNA. In Chlorobium chlorochromatii (strain CaD3), this protein is Putative pre-16S rRNA nuclease.